We begin with the raw amino-acid sequence, 416 residues long: S-adenosylmethionine synthase (416 aa).

Position 14 (His-14) interacts with ATP. Residue Asp-16 coordinates Mg(2+). Residue Glu-42 participates in K(+) binding. Positions 55 and 98 each coordinate L-methionine. The flexible loop stretch occupies residues 98 to 108; that stretch reads QSPDIARGVDT. ATP-binding positions include 173–175, 249–250, Asp-258, 264–265, Ala-281, and Lys-285; these read DGK, KF, and RK. Asp-258 provides a ligand contact to L-methionine. L-methionine is bound at residue Lys-289.

Belongs to the AdoMet synthase family. As to quaternary structure, homotetramer; dimer of dimers. It depends on Mg(2+) as a cofactor. Requires K(+) as cofactor.

The protein resides in the cytoplasm. It catalyses the reaction L-methionine + ATP + H2O = S-adenosyl-L-methionine + phosphate + diphosphate. It functions in the pathway amino-acid biosynthesis; S-adenosyl-L-methionine biosynthesis; S-adenosyl-L-methionine from L-methionine: step 1/1. Its function is as follows. Catalyzes the formation of S-adenosylmethionine (AdoMet) from methionine and ATP. The overall synthetic reaction is composed of two sequential steps, AdoMet formation and the subsequent tripolyphosphate hydrolysis which occurs prior to release of AdoMet from the enzyme. This is S-adenosylmethionine synthase from Thermosynechococcus vestitus (strain NIES-2133 / IAM M-273 / BP-1).